The primary structure comprises 433 residues: Serine--tRNA ligase (433 aa).

235 to 237 (TSE) contributes to the L-serine binding site. Residue 266–268 (RSE) coordinates ATP. Glutamate 289 serves as a coordination point for L-serine. 353–356 (EISS) lines the ATP pocket. Position 388 (serine 388) interacts with L-serine.

It belongs to the class-II aminoacyl-tRNA synthetase family. Type-1 seryl-tRNA synthetase subfamily. As to quaternary structure, homodimer. The tRNA molecule binds across the dimer.

Its subcellular location is the cytoplasm. The catalysed reaction is tRNA(Ser) + L-serine + ATP = L-seryl-tRNA(Ser) + AMP + diphosphate + H(+). It carries out the reaction tRNA(Sec) + L-serine + ATP = L-seryl-tRNA(Sec) + AMP + diphosphate + H(+). The protein operates within aminoacyl-tRNA biosynthesis; selenocysteinyl-tRNA(Sec) biosynthesis; L-seryl-tRNA(Sec) from L-serine and tRNA(Sec): step 1/1. Functionally, catalyzes the attachment of serine to tRNA(Ser). Is also able to aminoacylate tRNA(Sec) with serine, to form the misacylated tRNA L-seryl-tRNA(Sec), which will be further converted into selenocysteinyl-tRNA(Sec). The polypeptide is Serine--tRNA ligase (Burkholderia vietnamiensis (strain G4 / LMG 22486) (Burkholderia cepacia (strain R1808))).